A 338-amino-acid chain; its full sequence is DNA-directed RNA polymerase subunit alpha (338 aa).

Positions 1-226 (MLIAQRPTLS…ELFGLARELN (226 aa)) are alpha N-terminal domain (alpha-NTD). Residues 240–338 (DEQLAADLAL…DDAFVEDEQY (99 aa)) form an alpha C-terminal domain (alpha-CTD) region.

This sequence belongs to the RNA polymerase alpha chain family. As to quaternary structure, homodimer. The RNAP catalytic core consists of 2 alpha, 1 beta, 1 beta' and 1 omega subunit. When a sigma factor is associated with the core the holoenzyme is formed, which can initiate transcription.

It carries out the reaction RNA(n) + a ribonucleoside 5'-triphosphate = RNA(n+1) + diphosphate. In terms of biological role, DNA-dependent RNA polymerase catalyzes the transcription of DNA into RNA using the four ribonucleoside triphosphates as substrates. In Nocardioides sp. (strain ATCC BAA-499 / JS614), this protein is DNA-directed RNA polymerase subunit alpha.